The following is a 396-amino-acid chain: Phosphoglycerate kinase (396 aa).

Substrate-binding positions include 21–23, R36, 59–62, R118, and R151; these read DFN and HLGR. Residues K201, G292, E323, and 349-352 contribute to the ATP site; that span reads GGDS.

This sequence belongs to the phosphoglycerate kinase family. As to quaternary structure, monomer.

The protein localises to the cytoplasm. It carries out the reaction (2R)-3-phosphoglycerate + ATP = (2R)-3-phospho-glyceroyl phosphate + ADP. The protein operates within carbohydrate degradation; glycolysis; pyruvate from D-glyceraldehyde 3-phosphate: step 2/5. The sequence is that of Phosphoglycerate kinase from Leptospira interrogans serogroup Icterohaemorrhagiae serovar copenhageni (strain Fiocruz L1-130).